The chain runs to 525 residues: MSVEKQTAMRRTFAIISHPDAGKTTLTEKLLLFGGAIQLAGTIKSRKAARHATSDWMELEKQRGISVTTSVMQFPYKDYLINLLDTPGHADFTEDTYRTLTAVDSALMVIDAAKGVEPRTIKLMEVCRLRHTPIMTFINKMDRDTRPSIELLDEIESILRIHCAPVTWPIGMGKYFKGIYHLIEDAIYLYQPGKHERVGESERIEGINNPELDKKLGDLASELRNEIELVKGASHPFEREGYLKGELTPIFFGSAINNFGVGELLDAFVKEAPPPQGRETNSRLVKPEEEKFSGFVFKIQANMDPGHRDRIAFLRIASGQYQKGMKAYHVRLKKEIQINNALTFMAGKRENAEEAWPGDIIGLHNHGTIQIGDTFTQGERFKFTGIPNFASELFRLVRLKDPLKQKALLKGLTQLSEEGATQLFRPLDSNELILGAVGLLQFDVVAYRLENEYNVKCVYESVNVVTARWVICDDKAVLERFNQEQSRNLAYDGGGHLTYLAPSRVNLEITMEKWPEIQFSETREH.

One can recognise a tr-type G domain in the interval 8 to 276 (AMRRTFAIIS…AFVKEAPPPQ (269 aa)). GTP contacts are provided by residues 17 to 24 (SHPDAGKT), 85 to 89 (DTPGH), and 139 to 142 (NKMD).

It belongs to the TRAFAC class translation factor GTPase superfamily. Classic translation factor GTPase family. PrfC subfamily.

The protein resides in the cytoplasm. Its function is as follows. Increases the formation of ribosomal termination complexes and stimulates activities of RF-1 and RF-2. It binds guanine nucleotides and has strong preference for UGA stop codons. It may interact directly with the ribosome. The stimulation of RF-1 and RF-2 is significantly reduced by GTP and GDP, but not by GMP. The sequence is that of Peptide chain release factor 3 from Coxiella burnetii (strain RSA 331 / Henzerling II).